The primary structure comprises 834 residues: Kinesin-like protein KIF18B (834 aa).

The Kinesin motor domain maps to 9–353 (VVRVVVRVRP…LKYADRAKEI (345 aa)). 111–118 (GATGAGKT) lines the ATP pocket. The stretch at 368–404 (ISQYATICQQLQAEVAFLREKLQMYEAGAQALQQQCS) forms a coiled coil. Disordered regions lie at residues 400–508 (QQQC…ADHS), 602–642 (LGAP…NLEM), 655–686 (RGSL…RVCP), and 800–834 (KKPN…TESY). Positions 411 to 432 (SIPQSLSSSSLQPGPSSQSSTL) are enriched in low complexity. Thr431 carries the phosphothreonine modification. A compositionally biased stretch (polar residues) spans 462–474 (EQEQCPQDKQCPT). Position 484 is a phosphoserine (Ser484). Residues 611–620 (TSDKTFQKPT) are compositionally biased toward basic and acidic residues. Positions 619-627 (PTKEKKRKL) match the Nuclear localization signal motif. Phosphoserine occurs at positions 634 and 657. Residue Thr669 is modified to Phosphothreonine. Residue Ser814 is modified to Phosphoserine.

This sequence belongs to the TRAFAC class myosin-kinesin ATPase superfamily. Kinesin family. In terms of assembly, interacts with MAPRE1; this interaction is required for efficient accumulation at microtubule plus ends. Interacts with KIF2C at microtubule tips; this interaction increases the affinity of both partners for microtubule plus ends and is required for robust microtubule depolymerization. KIF2C phosphorylation by AURKA or AURKB strongly reduces KIF18B-binding.

The protein localises to the nucleus. Its subcellular location is the cytoplasm. It localises to the cytoskeleton. In terms of biological role, in complex with KIF2C, constitutes the major microtubule plus-end depolymerizing activity in mitotic cells. Its major role may be to transport KIF2C and/or MAPRE1 along microtubules. The sequence is that of Kinesin-like protein KIF18B (Kif18b) from Mus musculus (Mouse).